Here is a 533-residue protein sequence, read N- to C-terminus: Glucose-6-phosphate isomerase (533 aa).

Residue glutamate 341 is the Proton donor of the active site. Catalysis depends on residues histidine 372 and lysine 501.

Belongs to the GPI family.

The protein resides in the cytoplasm. It catalyses the reaction alpha-D-glucose 6-phosphate = beta-D-fructose 6-phosphate. It functions in the pathway carbohydrate biosynthesis; gluconeogenesis. It participates in carbohydrate degradation; glycolysis; D-glyceraldehyde 3-phosphate and glycerone phosphate from D-glucose: step 2/4. In terms of biological role, catalyzes the reversible isomerization of glucose-6-phosphate to fructose-6-phosphate. The sequence is that of Glucose-6-phosphate isomerase from Cereibacter sphaeroides (strain KD131 / KCTC 12085) (Rhodobacter sphaeroides).